The sequence spans 234 residues: Phosphoribosylaminoimidazole-succinocarboxamide synthase (234 aa).

The protein belongs to the SAICAR synthetase family.

It carries out the reaction 5-amino-1-(5-phospho-D-ribosyl)imidazole-4-carboxylate + L-aspartate + ATP = (2S)-2-[5-amino-1-(5-phospho-beta-D-ribosyl)imidazole-4-carboxamido]succinate + ADP + phosphate + 2 H(+). Its pathway is purine metabolism; IMP biosynthesis via de novo pathway; 5-amino-1-(5-phospho-D-ribosyl)imidazole-4-carboxamide from 5-amino-1-(5-phospho-D-ribosyl)imidazole-4-carboxylate: step 1/2. The sequence is that of Phosphoribosylaminoimidazole-succinocarboxamide synthase from Clostridium botulinum (strain Okra / Type B1).